We begin with the raw amino-acid sequence, 122 residues long: MRKSYRVKTERDFQKVFKEGQSMANRGFVVYTLPKENQKHFRVGISVGKKVGHTAVARNRLKRFIRATLTELKPEIRPDLDFLVIARPYARDFDMGRTKKNLIHVLRLAKVLSSEETEIEEK.

The protein belongs to the RnpA family. Consists of a catalytic RNA component (M1 or rnpB) and a protein subunit.

The catalysed reaction is Endonucleolytic cleavage of RNA, removing 5'-extranucleotides from tRNA precursor.. RNaseP catalyzes the removal of the 5'-leader sequence from pre-tRNA to produce the mature 5'-terminus. It can also cleave other RNA substrates such as 4.5S RNA. The protein component plays an auxiliary but essential role in vivo by binding to the 5'-leader sequence and broadening the substrate specificity of the ribozyme. This Lactobacillus johnsonii (strain CNCM I-12250 / La1 / NCC 533) protein is Ribonuclease P protein component.